A 291-amino-acid polypeptide reads, in one-letter code: T-cell leukemia homeobox protein 3 (291 aa).

Residues 1–51 (MEAPASAQTPHPHEPISFGIDQILNSPDQDSAPAPRGPDGASYLGGPPGGR) form a disordered region. The segment at residues 166–225 (RKKPRTSFSRVQICELEKRFHRQKYLASAERAALAKSLKMTDAQVKTWFQNRRTKWRRQT) is a DNA-binding region (homeobox).

It localises to the nucleus. This is T-cell leukemia homeobox protein 3 (Tlx3) from Mus musculus (Mouse).